A 294-amino-acid polypeptide reads, in one-letter code: Probable HTH-type transcriptional regulator LrrA (294 aa).

The 58-residue stretch at 1–58 (MNITQLQILAAVVETGNFSAAALQLDLSQSAVSRAIAALEDELGVVLLSRGRFGARPT) folds into the HTH lysR-type domain. A DNA-binding region (H-T-H motif) is located at residues 18-37 (FSAAALQLDLSQSAVSRAIA).

It belongs to the LysR transcriptional regulatory family.

This Synechococcus elongatus (strain ATCC 33912 / PCC 7942 / FACHB-805) (Anacystis nidulans R2) protein is Probable HTH-type transcriptional regulator LrrA (lrrA).